The following is a 596-amino-acid chain: Lamin-B2 (596 aa).

Residues 1–20 (MASLPPHAGPATPLSPTRLS) form a disordered region. Residues 1–26 (MASLPPHAGPATPLSPTRLSRLQEKE) form a head region. Threonine 12 is subject to Phosphothreonine. Serine 15 bears the Phosphoserine mark. An IF rod domain is found at 24–380 (EKEELRELND…KLLEGEEERL (357 aa)). Residues 27–61 (ELRELNDRLAHYIDRVRALELENDRLLLRISEKEE) are coil 1A. N6-acetyllysine; alternate is present on lysine 59. Lysine 59 participates in a covalent cross-link: Glycyl lysine isopeptide (Lys-Gly) (interchain with G-Cter in SUMO2); alternate. Positions 62-73 (VTTREVSGIKTL) are linker 1. The coil 1B stretch occupies residues 74–207 (YESELADARR…AFSKSVFEEE (134 aa)). Residues lysine 173 and lysine 233 each participate in a glycyl lysine isopeptide (Lys-Gly) (interchain with G-Cter in SUMO2) cross-link. Residues 208–234 (VRETRRRHERRLVEVDSSRQQEYDFKM) form a linker 2 region. The segment at 235 to 378 (AQALEDLRSQ…YRKLLEGEEE (144 aa)) is coil 2. Residues serine 294 and serine 385 each carry the phosphoserine modification. The interval 376 to 440 (EEERLKLSPS…ASRVSSGSRL (65 aa)) is disordered. The tract at residues 379–596 (RLKLSPSPSS…RTTSRGCRLM (218 aa)) is tail. The segment covering 382 to 403 (LSPSPSSRITISRATSSSSSSS) has biased composition (low complexity). Threonine 391 is a glycosylation site (O-linked (GlcNAc) threonine). Residues serine 398, serine 400, and serine 402 each carry the phosphoserine modification. Position 413 is an omega-N-methylarginine (arginine 413). The Nuclear localization signal signature appears at 415–420 (KRRRLE). Over residues 425 to 439 (SGSPSRASRVSSGSR) the composition is skewed to low complexity. Residues 438–559 (SRLAQQTVAT…VKAAKHSSVQ (122 aa)) enclose the LTD domain. Lysine 465 participates in a covalent cross-link: Glycyl lysine isopeptide (Lys-Gly) (interchain with G-Cter in SUMO2). Serine 473 is subject to Phosphoserine. A disordered region spans residues 552–596 (AAKHSSVQGRENGEEEEEEEAEFGEEDLFHQQGDPRTTSRGCRLM). The span at 564-577 (GEEEEEEEAEFGEE) shows a compositional bias: acidic residues. Polar residues predominate over residues 585-596 (DPRTTSRGCRLM). Cysteine 593 is modified (cysteine methyl ester). Cysteine 593 carries S-farnesyl cysteine lipidation. A propeptide spans 594–596 (RLM) (removed in mature form).

The protein belongs to the intermediate filament family. Dimer. Lamin dimers then assemble into dimeric head-to-tail polymers. Ultimately, two head-to-tail polymers assemble laterally into a protofilament with a uniformly shaped rod of 3.5 nm in diameter. Interacts with TMEM43. Post-translationally, B-type lamins undergo a series of modifications, such as farnesylation and phosphorylation. Increased phosphorylation of the lamins occurs before envelope disintegration and probably plays a role in regulating lamin associations. In terms of processing, phosphorylation plays a key role in lamin organization, subcellular localization and nuclear envelope disintegration. Phosphorylation by CDK1 at Ser-15 and Ser-385 at the onset of mitosis drives lamin disassembly and nuclear envelope breakdown. As to expression, germ cell-specific.

The protein resides in the nucleus lamina. Its function is as follows. Lamins are intermediate filament proteins that assemble into a filamentous meshwork, and which constitute the major components of the nuclear lamina, a fibrous layer on the nucleoplasmic side of the inner nuclear membrane. Lamins provide a framework for the nuclear envelope, bridging the nuclear envelope and chromatin, thereby playing an important role in nuclear assembly, chromatin organization, nuclear membrane and telomere dynamics. The structural integrity of the lamina is strictly controlled by the cell cycle, as seen by the disintegration and formation of the nuclear envelope in prophase and telophase, respectively. This Mus musculus (Mouse) protein is Lamin-B2 (Lmnb2).